Reading from the N-terminus, the 379-residue chain is 23S rRNA (uracil(747)-C(5))-methyltransferase RlmC (379 aa).

[4Fe-4S] cluster contacts are provided by C3, C11, C14, and C87. 4 residues coordinate S-adenosyl-L-methionine: Q212, F241, E262, and N309. The active-site Nucleophile is C336.

The protein belongs to the class I-like SAM-binding methyltransferase superfamily. RNA M5U methyltransferase family. RlmC subfamily.

The enzyme catalyses uridine(747) in 23S rRNA + S-adenosyl-L-methionine = 5-methyluridine(747) in 23S rRNA + S-adenosyl-L-homocysteine + H(+). In terms of biological role, catalyzes the formation of 5-methyl-uridine at position 747 (m5U747) in 23S rRNA. This is 23S rRNA (uracil(747)-C(5))-methyltransferase RlmC from Shewanella loihica (strain ATCC BAA-1088 / PV-4).